The following is a 463-amino-acid chain: Competence protein ComFA (463 aa).

Zn(2+)-binding residues include Cys-60, Cys-63, Cys-84, and Cys-87. Residues 133–285 enclose the Helicase ATP-binding domain; that stretch reads IEAISKKEEL…LNGQLHSVRI (153 aa). Residue 146–153 participates in ATP binding; it reads AVCGAGKT. The short motif at 233-236 is the DEAD box element; sequence DEVD. Positions 317–463 constitute a Helicase C-terminal domain; sequence AVKRWIEFHV…ELAAKVECTD (147 aa).

It belongs to the DEAD box helicase family. In terms of assembly, monomer and dimer in solution. Interacts with DprA and ComFC; ComFA-ComFC form rings about 150 Angstroms in diameter with apparent 6-fold symmetry. Zn(2+) serves as cofactor.

The protein localises to the cytoplasm. In terms of biological role, involved in transformation (genetic competence for DNA uptake). Required for DNA uptake but not for DNA binding to cells. DNA uptake is energy dependent, this protein may provide the driving force for DNA uptake. Does not have helicase activity, translocates on single-stranded (ss)DNA in a 5'-3' direction in an ATP-dependent manner, but does not unwind double-stranded (ds)DNA. ATP hydrolysis causes the release of ssDNA from ComFA. A ssDNA-stimulated ATPase; dsDNA does not stimulate ATPase. ATP hydrolysis causes the release of ssDNA from ComFA. Binds ssDNA but only very poorly to dsDNA in the absence of ATP. Binding to ssDNA does not require free DNA ends. This chain is Competence protein ComFA, found in Bacillus subtilis (strain 168).